The primary structure comprises 1045 residues: MTTKTVIKTKSYKLYDFNVYDGFSKAENLGKNGYDKFKDNKKFIIQMFGINTAGQTASIIVEDFNPFYYIKVGDDWTESDRCEFVSHIKGKLGVYYEDSIVASKLVKRHKLYGFDDNKLHTFIKISFTNTGAYNRAKKMFYIDSNVDGVFKRELLPDGYLYEETKCYLYEANIPPLLKLFHIQEISPSGWVQIQTDKITKMRQKSTHCAYEYITSYKHLKKADKDDIVKYSICSFDIEASSSHGDFPVPIKDYKKLATNILEYYNEMEDKTKFDVTCFKKHINAGYGYERCPDIATVYPKLKNISNEQLDNIFSNFMLYIPAKDQSRKDYIKENEESDSESDNDDEEDKKENDGADEAAAFHKRHKKVKKYNKTANILQIIQDDKCEHDTKLFELNKALTKFYPELEGDMVTFIGMTFLNYSDKKPHTRYIIVKGGCEVPEKYKSWVLENNVKIIEKTTEKGVLLEFTKIMTLENPHIVTGYNINGFDFDFMFKRSKEIGCTEDFLKLSKNIDEVCMTKDWKTGEMEIAKNKIVLASGEYNLSFVNMPGRIIVDMCVVFRREYTLSSNKLDYVSSYFISDSVKKIDVDKENNQTRIYSKNLTGLTVGCYVKFDEVSHSTNNYKKGQKFEILDINLDTASFLIDSAEELDLKKYKINWGLAKDDVSVQEIFELANKSDIDRFTVGKYCLGDCDNVIWLLIKVDIITDKVEMSNLCDVPLNFLLQRGQGIKLQSYVSKKCGEKNTLMPIVEKNLNDGGYEGAHVFNPKTGLYLEDPVACVDYSSLYPSSMISENLSHDSKVWTKEYDLSNNLIHSTGEKDADENFIYDNLPNYTYVDVKYDTYEYLRKTPKAAEKKTVVGYKICRFAQFPKGKAIMPAILEDLLSARKATKKLMGKEEDPFKQNIYDKRQLSIKVTANSLYGQCGARTSAFYEKDVAASCTAIGRKLLFYGKDVIEGCYNNVEITLSDGVKVVTKAECVYGDTDSVFFKFNLKTPEGKRIINKQALIYTIELAKQAGELATKFLKKPTRFRVRENILAFQSIIQEKI.

Residues 331-355 are disordered; the sequence is IKENEESDSESDNDDEEDKKENDGA. Residues 335 to 348 are compositionally biased toward acidic residues; it reads EESDSESDNDDEED.

It belongs to the DNA polymerase type-B family.

The catalysed reaction is DNA(n) + a 2'-deoxyribonucleoside 5'-triphosphate = DNA(n+1) + diphosphate. The chain is DNA polymerase (dpo) from Phaeocystis pouchetii (PpV01).